Here is a 649-residue protein sequence, read N- to C-terminus: Epithelial sodium channel subunit gamma (649 aa).

The Cytoplasmic portion of the chain corresponds to 1–55; the sequence is MAPGEKIKAKIKKNLPVTGPQAPTIKELMRWYCLNTNTHGCRRIVVSRGRLRRLL. The chain crosses the membrane as a helical span at residues 56–76; it reads WIGFTLTAVALILWQCALLVF. The Extracellular segment spans residues 77 to 541; the sequence is SFYTVSVSIK…GGQLGLWMSC (465 aa). Cystine bridges form between Cys-100–Cys-283, Cys-207–Cys-214, Cys-260–Cys-267, Cys-372–Cys-457, Cys-394–Cys-453, Cys-398–Cys-449, Cys-407–Cys-434, and Cys-409–Cys-423. The tract at residues 135–221 is gating release of inhibition by proteolysis (GRIP); protease-sensitive region that is responsible for the proteolytic activation of the channel; that stretch reads RKRREAESWN…SDCATYTFSS (87 aa). The N-linked (GlcNAc...) asparagine glycan is linked to Asn-209. A glycan (N-linked (GlcNAc...) asparagine) is linked at Asn-497. Residues 542-562 form a helical membrane-spanning segment; the sequence is SVVCVIEIIEVFFIDFFSIIA. The Cytoplasmic portion of the chain corresponds to 563–649; the sequence is RRQWQKAKEW…LTDTQMLDEL (87 aa). Residues 623-627 carry the PY motif; recruits WW domain-containing proteins and is thereby required for ubiquitination and inhibition of the channel by NEDD4 and NEDD4L motif; the sequence is PPPKY.

It belongs to the amiloride-sensitive sodium channel (TC 1.A.6) family. SCNN1G subfamily. In terms of assembly, component of the heterotrimeric epithelial sodium channel (ENaC) composed of an alpha/SCNN1A, a beta/SCNN1B and a gamma/SCNN1G subunit. An additional delta/SCNN1D subunit can replace the alpha/SCNN1A subunit to form an alternative channel with specific properties. Interacts with WWP1 (via WW domains). Interacts with WWP2 (via WW domains); inhibits the channel. Interacts with the full-length immature form of PCSK9 (pro-PCSK9); inhibits ENaC by promoting its proteasomal degradation. Interacts with BPIFA1; the interaction is indirect via SCNN1B and inhibits the proteolytic maturation of SCNN1A and SCNN1G and the activation of ENaC. Phosphorylated on serine and threonine residues. Aldosterone and insulin increase the basal level of phosphorylation. Post-translationally, ubiquitinated. Can be ubiquitinated at multiple sites and undergo monoubiquitination and polyubiquitination. Ubiquitination by NEDD4 or NEDD4L inhibits the ENaC channel through endocytosis, intracellular retention and degradation of its individual subunits. In terms of processing, ENaC is activated through the proteolytic maturation of its subunits. Furin cleaves the SCNN1G subunit first, followed by cleavage by prostasin (PRSS8), which results in a stepwise increase in the open probability of the channel due to the release of an inhibitory tract. BPIFA1, which is recruited by the SCNN1B subunit, prevents the proteolytic activation of ENaC. N-glycosylated. N-linked glycans are processed to complex type during ENaC complex assembly and transport to the plasma membrane. In terms of tissue distribution, expressed in kidney (at protein level).

Its subcellular location is the apical cell membrane. It catalyses the reaction Na(+)(in) = Na(+)(out). Its activity is regulated as follows. Originally identified and characterized by its inhibition by the diuretic drug amiloride. This is one of the three pore-forming subunits of the heterotrimeric epithelial sodium channel (ENaC), a critical regulator of sodium balance and fluid homeostasis. ENaC operates in epithelial tissues, where it mediates the electrodiffusion of sodium ions from extracellular fluid through the apical membrane of cells, with water following osmotically. It plays a key role in maintaining sodium homeostasis through electrogenic sodium reabsorption in the kidneys. Additionally, ENaC is essential for airway surface liquid homeostasis, which is crucial for proper mucus clearance. This Homo sapiens (Human) protein is Epithelial sodium channel subunit gamma.